The sequence spans 165 residues: Nucleotide-binding protein RoseRS_0530 (165 aa).

Belongs to the YajQ family.

Its function is as follows. Nucleotide-binding protein. In Roseiflexus sp. (strain RS-1), this protein is Nucleotide-binding protein RoseRS_0530.